Here is a 743-residue protein sequence, read N- to C-terminus: 1,4-alpha-glucan branching enzyme GlgB (743 aa).

Asp-416 serves as the catalytic Nucleophile. Glu-469 (proton donor) is an active-site residue.

The protein belongs to the glycosyl hydrolase 13 family. GlgB subfamily. As to quaternary structure, monomer.

It carries out the reaction Transfers a segment of a (1-&gt;4)-alpha-D-glucan chain to a primary hydroxy group in a similar glucan chain.. It functions in the pathway glycan biosynthesis; glycogen biosynthesis. Functionally, catalyzes the formation of the alpha-1,6-glucosidic linkages in glycogen by scission of a 1,4-alpha-linked oligosaccharide from growing alpha-1,4-glucan chains and the subsequent attachment of the oligosaccharide to the alpha-1,6 position. The chain is 1,4-alpha-glucan branching enzyme GlgB from Shewanella baltica (strain OS223).